The primary structure comprises 132 residues: Small ribosomal subunit protein uS8 (132 aa).

The protein belongs to the universal ribosomal protein uS8 family. In terms of assembly, part of the 30S ribosomal subunit. Contacts proteins S5 and S12.

In terms of biological role, one of the primary rRNA binding proteins, it binds directly to 16S rRNA central domain where it helps coordinate assembly of the platform of the 30S subunit. This is Small ribosomal subunit protein uS8 from Chelativorans sp. (strain BNC1).